The following is a 389-amino-acid chain: Probable transcription factor FL (389 aa).

Disordered regions lie at residues 1 to 41 (MDPN…ANVP) and 140 to 226 (EHDM…HPFV). Pro residues predominate over residues 19–39 (PPAPAPVPPPPPPPPPPPPAN). Residues 159–180 (VTGKKQAKKGSAARKGKKARRK) show a composition bias toward basic residues. Residues 161 to 168 (GKKQAKKG) carry the Nuclear localization signal motif. The segment covering 190–201 (QEDEMDCCDEDG) has biased composition (acidic residues). 3 DNA-binding regions span residues 221-225 (REHPF), 290-297 (NKPKMRHY), and 361-364 (YVPT).

The protein belongs to the FLO/LFY family. In terms of assembly, interacts with APO1. As to expression, in very young panicle but not in mature florets, mature leaves, roots or apical meristems.

Its subcellular location is the nucleus. In terms of biological role, probable transcription factor. Together with APO1, involved in the temporal regulation of meristem size and identity during both vegetative and reproductive developments through interaction with APO1. Promotes flowering. The polypeptide is Probable transcription factor FL (Oryza sativa subsp. japonica (Rice)).